The chain runs to 214 residues: Large ribosomal subunit protein uL2my, C-terminal part (214 aa).

The N-terminal 30 residues, 1 to 30 (MSGLVALCRARASASSSLFNSVIRPAFRNF), are a transit peptide targeting the mitochondrion. Residues 157–214 (VAMNPCDHPHGGGEGKSKSSGSRGRTSVSPWGKPCKGGYKSASVKKKKKRLAEAAAKM) are disordered. Positions 163–173 (DHPHGGGEGKS) are enriched in basic and acidic residues. Over residues 174-185 (KSSGSRGRTSVS) the composition is skewed to low complexity.

Belongs to the universal ribosomal protein uL2 family. In terms of assembly, component of the mitochondrial ribosome large subunit.

The protein resides in the mitochondrion. This Arabidopsis thaliana (Mouse-ear cress) protein is Large ribosomal subunit protein uL2my, C-terminal part.